Consider the following 485-residue polypeptide: Glutamyl-tRNA(Gln) amidotransferase subunit A (485 aa).

Catalysis depends on charge relay system residues lysine 78 and serine 153. Serine 177 acts as the Acyl-ester intermediate in catalysis.

It belongs to the amidase family. GatA subfamily. In terms of assembly, heterotrimer of A, B and C subunits.

It carries out the reaction L-glutamyl-tRNA(Gln) + L-glutamine + ATP + H2O = L-glutaminyl-tRNA(Gln) + L-glutamate + ADP + phosphate + H(+). In terms of biological role, allows the formation of correctly charged Gln-tRNA(Gln) through the transamidation of misacylated Glu-tRNA(Gln) in organisms which lack glutaminyl-tRNA synthetase. The reaction takes place in the presence of glutamine and ATP through an activated gamma-phospho-Glu-tRNA(Gln). This is Glutamyl-tRNA(Gln) amidotransferase subunit A from Bacillus cereus (strain Q1).